We begin with the raw amino-acid sequence, 593 residues long: UvrABC system protein C (593 aa).

The GIY-YIG domain maps to D14–I91. The 36-residue stretch at N196–L231 folds into the UVR domain.

It belongs to the UvrC family. In terms of assembly, interacts with UvrB in an incision complex.

It is found in the cytoplasm. The UvrABC repair system catalyzes the recognition and processing of DNA lesions. UvrC both incises the 5' and 3' sides of the lesion. The N-terminal half is responsible for the 3' incision and the C-terminal half is responsible for the 5' incision. In Streptococcus agalactiae serotype Ia (strain ATCC 27591 / A909 / CDC SS700), this protein is UvrABC system protein C.